Reading from the N-terminus, the 785-residue chain is (+)-copalyl diphosphate synthase 3, chloroplastic (785 aa).

Substrate is bound at residue Lys238. Residues Asp371 and Asp373 each contribute to the Mg(2+) site. The short motif at 371-374 (DIDD) is the DXDD motif element. Residue Lys457 coordinates substrate.

It belongs to the terpene synthase family. Mg(2+) is required as a cofactor. As to expression, present in both leaves and flowers, with higher levels in leaves.

The protein localises to the plastid. The protein resides in the chloroplast. It carries out the reaction (2E,6E,10E)-geranylgeranyl diphosphate = (+)-copalyl diphosphate. It participates in secondary metabolite biosynthesis; terpenoid biosynthesis. In terms of biological role, involved in the biosynthesis of labdane-type diterpenoid including marrubiin and other labdane-related furanoid diterpenoids with potential applications as anti-diabetics, analgesics or vasorelaxants. Terpene synthase that produces (+)-copalyl diphosphate ((+)-CPP) from geranylgeranyl diphosphate (GGPP). This is (+)-copalyl diphosphate synthase 3, chloroplastic from Marrubium vulgare (White horehound).